The chain runs to 402 residues: UPF0261 protein BP1203 (402 aa).

It belongs to the UPF0261 family.

The chain is UPF0261 protein BP1203 from Bordetella pertussis (strain Tohama I / ATCC BAA-589 / NCTC 13251).